Reading from the N-terminus, the 570-residue chain is MDELPKCGANYVPLTPLTFLTRAFKSYANRTSIIYAGARFTWEQTYKRCCRLASSLQSLNIVKNDVVSVLAPNVPATYEMHFAVPMAGAVLNTINTRLDPMNIAIILKHSEAKLLFVDYEYLEKARKALELLMSTNFITAQNSKKISMPQVILIDDLYSPTRIQQQDQLEYEQLVHQGNPEYAPENIVDDEWDPIVLNYTSGTTSEPKGVVYSHRGAFLSTLNTIMGWEMGTEPVYLWSLPMFHINGWTLTWGIAARGGTNVCIRNTTAQEIYSNITLHKVTHMCCAPTVFNILLEAKPHERREITTPVQVMVGGAPPPTTLIGKIEELGFHVVHCYGITEAGGTTLVCEWQSEWNKLSREDQANLKARQGISVLALEDVDVKNSKTMQSVPHNGKTMGEICLRGSSIMKGYFKNDKANSQVFKNGWFLTGDVAVIHQDGYLEIKDRCKDIIISGGENISSIEVENAILKHPSVIEAAVVAMPHPRWGETPCAFVIKTKNPEIKEADIIVHCKKELPGFMVPKHVQFLEELPKTGTGKVKKLQLREMAKSFGIFDNANQTSQILDLPARL.

A Microbody targeting signal motif is present at residues 568-570 (ARL).

It belongs to the ATP-dependent AMP-binding enzyme family. Monomer. The cofactor is K(+). Mostly expressed in flower organs, with highest levels in corollas and petal limbs, and, to a lesser extent, in petal tubes, sepals, pistils, stamen, stigma, anthers and ovaries. Also present at low levels in leaves, stems and roots.

The protein localises to the peroxisome. The catalysed reaction is (E)-4-coumarate + ATP + CoA = (E)-4-coumaroyl-CoA + AMP + diphosphate. It catalyses the reaction (E)-caffeate + ATP + CoA = (E)-caffeoyl-CoA + AMP + diphosphate. It carries out the reaction (E)-cinnamate + ATP + CoA = (E)-cinnamoyl-CoA + AMP + diphosphate. Its pathway is phenylpropanoid metabolism; trans-cinnamate biosynthesis. It participates in phytoalexin biosynthesis; 3,4',5-trihydroxystilbene biosynthesis; 3,4',5-trihydroxystilbene from trans-4-coumarate: step 1/2. Involved in the biosynthesis of floral volatile benzenoid/phenylpropanoid (FVBP) scent (e.g. benzylbenzoate, phenylethylbenzoate, and methylbenzoate). Catalyzes the formation of CoA esters of cinnamic acid, and, with lower efficiency, of 4-coumaric acid and caffeic acid. In Petunia hybrida (Petunia), this protein is Trans-cinnamate:CoA ligase, peroxisomal.